Consider the following 241-residue polypeptide: Aspartate/glutamate leucyltransferase (241 aa).

The protein belongs to the R-transferase family. Bpt subfamily.

It localises to the cytoplasm. The enzyme catalyses N-terminal L-glutamyl-[protein] + L-leucyl-tRNA(Leu) = N-terminal L-leucyl-L-glutamyl-[protein] + tRNA(Leu) + H(+). It carries out the reaction N-terminal L-aspartyl-[protein] + L-leucyl-tRNA(Leu) = N-terminal L-leucyl-L-aspartyl-[protein] + tRNA(Leu) + H(+). Functionally, functions in the N-end rule pathway of protein degradation where it conjugates Leu from its aminoacyl-tRNA to the N-termini of proteins containing an N-terminal aspartate or glutamate. This is Aspartate/glutamate leucyltransferase from Helicobacter hepaticus (strain ATCC 51449 / 3B1).